Reading from the N-terminus, the 302-residue chain is Lysosomal thioesterase PPT2 (302 aa).

The first 27 residues, 1-27 (MLGLCGQRLPAAWVLLLLPFLPLLLLA), serve as a signal peptide directing secretion. A glycan (N-linked (GlcNAc...) asparagine) is linked at Asn60. 2 cysteine pairs are disulfide-bonded: Cys109/Cys117 and Cys165/Cys176. The active-site Nucleophile is the Ser111. N-linked (GlcNAc...) asparagine glycans are attached at residues Asn190 and Asn206. The active site involves Asp228. Asn245 carries an N-linked (GlcNAc...) asparagine glycan. Cys276 and Cys296 are oxidised to a cystine. Residue His283 is part of the active site. A glycan (N-linked (GlcNAc...) asparagine) is linked at Asn289.

The protein belongs to the palmitoyl-protein thioesterase family. Broadly expressed, with highest levels in skeletal muscle.

Its subcellular location is the lysosome. The catalysed reaction is hexadecanoyl-CoA + H2O = hexadecanoate + CoA + H(+). The enzyme catalyses S-hexadecanoyl-N-acetylcysteamine + H2O = N-acetylcysteamine + hexadecanoate + H(+). Catalyzes the cleavage of thioester bonds from S-palmitoyl-CoA or S-palmitoyl-N-acetylcysteamine (unbranched structures) but does not have activity against palmitoylcysteine or palmitoylated proteins, branched structures or bulky head groups. Conversely, hydrolyzes both long and short chain fatty acyl-CoA substrate. Its function is as follows. Catalytically inactive due to lack of active site His-283. This Homo sapiens (Human) protein is Lysosomal thioesterase PPT2.